Reading from the N-terminus, the 601-residue chain is Probable translation initiation factor IF-2 (601 aa).

The 218-residue stretch at 10–227 (LRAPIVVVLG…VLAGLAQRYL (218 aa)) folds into the tr-type G domain. The segment at 19 to 26 (GHVDAGKT) is G1. 19 to 26 (GHVDAGKT) provides a ligand contact to GTP. Residues 44–48 (TMTQH) form a G2 region. Positions 83–86 (DTPG) are G3. Residues 83–87 (DTPGH) and 137–140 (NKID) each bind GTP. Positions 137–140 (NKID) are G4. A G5 region spans residues 205 to 207 (SAV).

The protein belongs to the TRAFAC class translation factor GTPase superfamily. Classic translation factor GTPase family. IF-2 subfamily.

In terms of biological role, function in general translation initiation by promoting the binding of the formylmethionine-tRNA to ribosomes. Seems to function along with eIF-2. The sequence is that of Probable translation initiation factor IF-2 from Thermofilum pendens (strain DSM 2475 / Hrk 5).